The chain runs to 317 residues: Acetylglutamate kinase (317 aa).

Substrate contacts are provided by residues 70–71 (GG), R92, and N191.

This sequence belongs to the acetylglutamate kinase family. ArgB subfamily.

The protein resides in the cytoplasm. It carries out the reaction N-acetyl-L-glutamate + ATP = N-acetyl-L-glutamyl 5-phosphate + ADP. It functions in the pathway amino-acid biosynthesis; L-arginine biosynthesis; N(2)-acetyl-L-ornithine from L-glutamate: step 2/4. Its function is as follows. Catalyzes the ATP-dependent phosphorylation of N-acetyl-L-glutamate. This chain is Acetylglutamate kinase, found in Corynebacterium glutamicum (strain R).